An 839-amino-acid chain; its full sequence is DNA (cytosine-5)-methyltransferase CMT3 (839 aa).

Disordered stretches follow at residues 1–38 and 51–86; these read MAPK…EPVT and LDEP…KTKD. Basic residues predominate over residues 19–30; the sequence is PKPKKRAPKRAK. Over residues 51-70 the composition is skewed to basic and acidic residues; the sequence is LDEPIPESEAKSTWPDRYKP. Positions 108–227 constitute a BAH domain; the sequence is QIYELNDDAY…LPYDTFEAIQ (120 aa). The SAM-dependent MTase C5-type domain maps to 269–813; it reads ATLLDLYSGC…YALGTAFQGL (545 aa). The region spanning 382 to 447 is the Chromo domain; the sequence is FTVDKIVGIS…LGYKSGILPL (66 aa). Cys460 is a catalytic residue.

This sequence belongs to the class I-like SAM-binding methyltransferase superfamily. C5-methyltransferase family. In terms of assembly, homodimer. Interacts with HP1 and, through its chromodomain, with the N-terminal tail of histone H3 doubly methylated at 'Lys-9' and 'Lys-27'. Binds to JMJ24. Post-translationally, ubiquitinated by JMJ24, subsequently beingargeted to proteasomal degradation thus initiating the destabilization of the heterochromatic state of endogenous silenced loci.

Its subcellular location is the nucleus. The enzyme catalyses a 2'-deoxycytidine in DNA + S-adenosyl-L-methionine = a 5-methyl-2'-deoxycytidine in DNA + S-adenosyl-L-homocysteine + H(+). In terms of biological role, involved in the CpXpG methylation (e.g. CHG cytosine) and in gene silencing. Methylates preferentially transposon-related sequences. Functionally redundant to DRM1/DRM2 to maintain non-CpG methylation. Involved in RNA-directed DNA methylation. This is DNA (cytosine-5)-methyltransferase CMT3 from Arabidopsis thaliana (Mouse-ear cress).